The primary structure comprises 434 residues: Nicotinate phosphoribosyltransferase (434 aa).

Residue H242 is modified to Phosphohistidine; by autocatalysis.

Belongs to the NAPRTase family. Transiently phosphorylated on a His residue during the reaction cycle. Phosphorylation strongly increases the affinity for substrates and increases the rate of nicotinate D-ribonucleotide production. Dephosphorylation regenerates the low-affinity form of the enzyme, leading to product release.

It catalyses the reaction nicotinate + 5-phospho-alpha-D-ribose 1-diphosphate + ATP + H2O = nicotinate beta-D-ribonucleotide + ADP + phosphate + diphosphate. Its pathway is cofactor biosynthesis; NAD(+) biosynthesis; nicotinate D-ribonucleotide from nicotinate: step 1/1. Its function is as follows. Catalyzes the synthesis of beta-nicotinate D-ribonucleotide from nicotinate and 5-phospho-D-ribose 1-phosphate at the expense of ATP. This Agrobacterium fabrum (strain C58 / ATCC 33970) (Agrobacterium tumefaciens (strain C58)) protein is Nicotinate phosphoribosyltransferase.